Consider the following 396-residue polypeptide: Seminal vesicle major clotting proteins (396 aa).

The signal sequence occupies residues 1-21 (MKSTIFFILSLLLMLENQAAG). The disordered stretch occupies residues 45–178 (MEEAVSGSGL…ASSVDHRKKG (134 aa)). Positions 60–152 (RGSDREESVG…RVSVRHERVE (93 aa)) are enriched in basic and acidic residues. SVP-3/-4 repeat repeat units lie at residues 65 to 88 (EESVGERVSLRQEEFEKGHIRSSV), 89 to 112 (EEPEGEHVSVRREHLEKSHIRHNV), and 113 to 136 (EEPEGERVSVRREHLEKSHIRHSA). The stretch at 137–157 (EEPEGERVSVRHERVEKTHKR) is one SVP-3/-4 repeat; truncated repeat. The propeptide occupies 177–192 (KGHIRFKRQDPIAALA). 8 SVP-1 clotting repeats span residues 194–217 (IEGQDAVKDSLWVKGQASSEERFS), 218–241 (VKGQDLVKGHLQMKGQSSLAERFS), 242–265 (VTGQDSVKGRLQMKGQDTLAERFS), 266–289 (MTGQDSVKSRLQMKGQDSLSERFS), 290–313 (MTGQDSVKGRLQMKGQSSLAERFS), 314–337 (VTGQDSVKGRLQMKGKDTLAERFS), 338–361 (VTGQDSVKGRLQMKGHDLLEERFS), and 362–385 (VSGQDSVKGLARIKGQESVQSGFS). The segment at 194–396 (IEGQDAVKDS…KGQGSLKGLI (203 aa)) is 9 X tandem repeats of SVP-1 like motif. A disordered region spans residues 377 to 396 (QESVQSGFSVKGQGSLKGLI). An SVP-1 clotting 9; truncated repeat occupies 386-396 (VKGQGSLKGLI).

The protein to the SVP-2 precursor, particularly in regions where protein processing must occur. In terms of processing, SVP-3 may be a post-translationally modified form of SVP-4. Covalent clotting of SVP-1 is catalyzed by a transglutaminase secreted by the anterior prostate through the formation of gamma-glutamyl-epsilon-lysine cross-links. The conserved 2 Lys and 1 Gln residues per functional unit seem to be the residues involved in the formation of those cross-links.

It localises to the secreted. Its function is as follows. SVP-1 serves as substrate in the formation of the copulatory plug. SVP-3 and SVP-4 may also contribute to the clot. This Cavia porcellus (Guinea pig) protein is Seminal vesicle major clotting proteins.